The following is a 95-amino-acid chain: Small ribosomal subunit protein bS6 (95 aa).

It belongs to the bacterial ribosomal protein bS6 family.

Functionally, binds together with bS18 to 16S ribosomal RNA. This Corynebacterium efficiens (strain DSM 44549 / YS-314 / AJ 12310 / JCM 11189 / NBRC 100395) protein is Small ribosomal subunit protein bS6.